The following is a 240-amino-acid chain: EF-hand domain-containing protein D2 (240 aa).

Residues 1–51 form a disordered region; that stretch reads MATDELASKLSRRLQMEGEGGEATEQPGLNGAAAAAAAEAPDETAQALGSA. The residue at position 2 (alanine 2) is an N-acetylalanine. A Phosphoserine modification is found at serine 11. Over residues 32–47 the composition is skewed to low complexity; sequence AAAAAAAEAPDETAQA. Residues serine 74 and serine 76 each carry the phosphoserine modification. Tyrosine 83 is modified (phosphotyrosine). EF-hand domains are found at residues 92–127 and 128–163; these read KQIK…LGAP and QTHL…AAAG. 8 residues coordinate Ca(2+): aspartate 105, aspartate 109, glutamate 116, aspartate 141, aspartate 143, aspartate 145, lysine 147, and glutamate 152. Lysine 233 is subject to N6-acetyllysine.

As to quaternary structure, interacts with CASP9; with inactive form. In terms of tissue distribution, detected in thymus, kidney, spleen, lung, liver and brain. Highest abundance in brain and lowest in kidney and thymus.

The protein localises to the membrane raft. Functionally, may regulate B-cell receptor (BCR)-induced immature and primary B-cell apoptosis. Plays a role as negative regulator of the canonical NF-kappa-B-activating branch. Controls spontaneous apoptosis through the regulation of BCL2L1 abundance. The protein is EF-hand domain-containing protein D2 (Efhd2) of Mus musculus (Mouse).